The primary structure comprises 295 residues: MDQKQIEEIVRSVMASMGQTAPAPSEAKCATTTCAAPVTSESCALDLGSAEAKVWIGVENPHRADVLTELRRSTVARVCTGRAGPRPRTLALLRFLADHSRSKDTVLKEVPEEWVKAQGLLEVRSEISDKNLYLTRPDMGRRLCAEAVEALKAQCVANPDVQVVISDGLSTDAITVNYEEILPPLMAGLKQAGLKVGTPFFVRYGRVKIEDQIGEILGAKVVILLVGERPGLGQSESLSCYAVYSPRMATTVEADRTCISNIHQGGTPPVEAAAVIVDLAKRMLEQKASGINMTR.

Residues Val-207, Glu-228, and Cys-258 each contribute to the adenosylcob(III)alamin site.

The protein belongs to the EutC family. As to quaternary structure, the basic unit is a heterodimer which dimerizes to form tetramers. The heterotetramers trimerize; 6 large subunits form a core ring with 6 small subunits projecting outwards. The cofactor is adenosylcob(III)alamin.

The protein localises to the bacterial microcompartment. It catalyses the reaction ethanolamine = acetaldehyde + NH4(+). It participates in amine and polyamine degradation; ethanolamine degradation. In terms of biological role, catalyzes the deamination of various vicinal amino-alcohols to oxo compounds. Allows this organism to utilize ethanolamine as the sole source of nitrogen and carbon in the presence of external vitamin B12. The protein is Ethanolamine ammonia-lyase small subunit of Escherichia coli O157:H7.